The following is a 301-amino-acid chain: Glycine--tRNA ligase alpha subunit (301 aa).

Belongs to the class-II aminoacyl-tRNA synthetase family. Tetramer of two alpha and two beta subunits.

The protein localises to the cytoplasm. It carries out the reaction tRNA(Gly) + glycine + ATP = glycyl-tRNA(Gly) + AMP + diphosphate. The polypeptide is Glycine--tRNA ligase alpha subunit (Shewanella amazonensis (strain ATCC BAA-1098 / SB2B)).